The following is a 271-amino-acid chain: Plasmanylethanolamine desaturase 1 (271 aa).

The segment at 1–25 (MAGAEDAPGRQPELDEDETAEGRRW) is disordered. 3 helical membrane-spanning segments follow: residues 48–68 (WCSV…LLLL), 75–95 (PLVI…SGLV), and 166–186 (LYPW…TNQI). Residues 187–191 (HKWSH) carry the Histidine box-1 motif. Positions 214-218 (HHRIH) match the Histidine box-2 motif.

It belongs to the fatty acid desaturase CarF family.

Its subcellular location is the endoplasmic reticulum membrane. The catalysed reaction is a 1-(1,2-saturated alkyl)-2-acyl-sn-glycero-3-phosphoethanolamine + 2 Fe(II)-[cytochrome b5] + O2 + 2 H(+) = a 1-O-(1Z-alkenyl)-2-acyl-sn-glycero-3-phosphoethanolamine + 2 Fe(III)-[cytochrome b5] + 2 H2O. The enzyme catalyses a 1-O-hexadecyl-2-acyl-sn-glycero-3-phosphoethanolamine + 2 Fe(II)-[cytochrome b5] + O2 + 2 H(+) = a 1-O-(1Z-hexadecenyl)-2-acyl-sn-glycero-3-phosphoethanolamine + 2 Fe(III)-[cytochrome b5] + 2 H2O. It carries out the reaction a 1-O-octadecyl-2-acyl-sn-glycero-3-phosphoethanolamine + 2 Fe(II)-[cytochrome b5] + O2 + 2 H(+) = a 1-O-(1Z-octadecenyl)-2-acyl-sn-glycero-3-phosphoethanolamine + 2 Fe(III)-[cytochrome b5] + 2 H2O. It catalyses the reaction a 1-O-(9Z-octadecenyl)-2-acyl-sn-glycero-3-phosphoethanolamine + 2 Fe(II)-[cytochrome b5] + O2 + 2 H(+) = a 1-O-(1Z,9Z-octadecadienyl)-2-acyl-sn-glycero-3-phosphoethanolamine + 2 Fe(III)-[cytochrome b5] + 2 H2O. It functions in the pathway lipid metabolism; fatty acid metabolism. In terms of biological role, plasmanylethanolamine desaturase involved in plasmalogen biogenesis in the endoplasmic reticulum membrane. Plasmalogens are glycerophospholipids with a hydrocarbon chain linked by a vinyl ether bond at the glycerol sn-1 position, and are involved in antioxidative and signaling mechanisms. This is Plasmanylethanolamine desaturase 1 from Mus musculus (Mouse).